The following is a 246-amino-acid chain: Ribonuclease PH (246 aa).

Residues Arg91 and 129 to 131 (GTR) each bind phosphate.

The protein belongs to the RNase PH family. In terms of assembly, homohexameric ring arranged as a trimer of dimers.

It carries out the reaction tRNA(n+1) + phosphate = tRNA(n) + a ribonucleoside 5'-diphosphate. In terms of biological role, phosphorolytic 3'-5' exoribonuclease that plays an important role in tRNA 3'-end maturation. Removes nucleotide residues following the 3'-CCA terminus of tRNAs; can also add nucleotides to the ends of RNA molecules by using nucleoside diphosphates as substrates, but this may not be physiologically important. Probably plays a role in initiation of 16S rRNA degradation (leading to ribosome degradation) during starvation. The sequence is that of Ribonuclease PH from Paraburkholderia phytofirmans (strain DSM 17436 / LMG 22146 / PsJN) (Burkholderia phytofirmans).